Reading from the N-terminus, the 302-residue chain is Large ribosomal subunit protein uL4m (302 aa).

The protein belongs to the universal ribosomal protein uL4 family. In terms of assembly, component of the mitochondrial ribosome large subunit (39S) which comprises a 16S rRNA and about 50 distinct proteins.

The protein resides in the mitochondrion. The sequence is that of Large ribosomal subunit protein uL4m (mrpl4) from Danio rerio (Zebrafish).